The following is a 284-amino-acid chain: Phosphoenolpyruvate guanylyltransferase (284 aa).

The interval 94 to 123 is disordered; that stretch reads ADLSADEPAGTDAERRADPSAENRASTSAQ. Basic and acidic residues predominate over residues 105-114; the sequence is DAERRADPSA. Phosphoenolpyruvate contacts are provided by Thr-203, Gly-219, and Ser-222.

The protein belongs to the CofC family.

It carries out the reaction phosphoenolpyruvate + GTP + H(+) = enolpyruvoyl-2-diphospho-5'-guanosine + diphosphate. It functions in the pathway cofactor biosynthesis; coenzyme F420 biosynthesis. Guanylyltransferase that catalyzes the activation of phosphoenolpyruvate (PEP) as enolpyruvoyl-2-diphospho-5'-guanosine, via the condensation of PEP with GTP. It is involved in the biosynthesis of coenzyme F420, a hydride carrier cofactor. The chain is Phosphoenolpyruvate guanylyltransferase from Sanguibacter keddieii (strain ATCC 51767 / DSM 10542 / NCFB 3025 / ST-74).